The chain runs to 289 residues: 4-diphosphocytidyl-2-C-methyl-D-erythritol kinase (289 aa).

Residue Lys-13 is part of the active site. 101–111 (PMGGGLGGGSS) is a binding site for ATP. Asp-143 is an active-site residue.

It belongs to the GHMP kinase family. IspE subfamily.

The enzyme catalyses 4-CDP-2-C-methyl-D-erythritol + ATP = 4-CDP-2-C-methyl-D-erythritol 2-phosphate + ADP + H(+). Its pathway is isoprenoid biosynthesis; isopentenyl diphosphate biosynthesis via DXP pathway; isopentenyl diphosphate from 1-deoxy-D-xylulose 5-phosphate: step 3/6. In terms of biological role, catalyzes the phosphorylation of the position 2 hydroxy group of 4-diphosphocytidyl-2C-methyl-D-erythritol. This is 4-diphosphocytidyl-2-C-methyl-D-erythritol kinase from Janthinobacterium sp. (strain Marseille) (Minibacterium massiliensis).